A 186-amino-acid chain; its full sequence is MKLYASEIRVGMLIEYKNDLWQVLKTQHVKPGKGGAFAQVEMKSVNKNTKLNERFRSSESVEKASLDETKFNYLYSDEIDYYFMDPKSYEQINIKKETIGEKGKMLTENLEVSISFYNEKPLTVELPNQVTCTVDTTDVALKGQTVSSSYKPATLDNGVNIQVPPFIESGDKIIVDTRTMEYVKKI.

This sequence belongs to the elongation factor P family.

It is found in the cytoplasm. The protein operates within protein biosynthesis; polypeptide chain elongation. Functionally, involved in peptide bond synthesis. Stimulates efficient translation and peptide-bond synthesis on native or reconstituted 70S ribosomes in vitro. Probably functions indirectly by altering the affinity of the ribosome for aminoacyl-tRNA, thus increasing their reactivity as acceptors for peptidyl transferase. This is Elongation factor P from Pelagibacter ubique (strain HTCC1062).